A 583-amino-acid chain; its full sequence is Chitinase 2 (583 aa).

The N-terminal stretch at 1–19 (MLSFKSLLAAAVVASSALA) is a signal peptide. The GH18 domain occupies 23-305 (NQVALYWGQN…VQVKNVLNQN (283 aa)). Glu-153 functions as the Proton donor in the catalytic mechanism. 3 N-linked (GlcNAc...) asparagine glycosylation sites follow: Asn-370, Asn-546, and Asn-549. Gly-560 carries GPI-anchor amidated glycine lipidation. Residues 561 to 583 (AAVANSLNSVWFTVPFLLAAFAF) constitute a propeptide, removed in mature form.

This sequence belongs to the glycosyl hydrolase 18 family. Chitinase class III subfamily. The GPI-anchor is attached to the protein in the endoplasmic reticulum and serves to target the protein to the cell surface. There, the glucosamine-inositol phospholipid moiety is cleaved off and the GPI-modified mannoprotein is covalently attached via its lipidless GPI glycan remnant to the 1,6-beta-glucan of the outer cell wall layer. In terms of processing, proteolytic cleavage by SAP9 and SAP10 leads to the cell wall release of CHT2 and increased chitinase activity, suggesting a direct influence of SAP9 and SAP10 on CHT2 function.

Its subcellular location is the secreted. It is found in the cell wall. The protein resides in the membrane. The catalysed reaction is Random endo-hydrolysis of N-acetyl-beta-D-glucosaminide (1-&gt;4)-beta-linkages in chitin and chitodextrins.. Functionally, chitinase involved in the remodeling of chitin in the fungal cell wall. Plays a role in cell separation. The chain is Chitinase 2 (CHT2) from Candida albicans (strain SC5314 / ATCC MYA-2876) (Yeast).